Consider the following 58-residue polypeptide: UPF0339 protein MA_3316 (58 aa).

Belongs to the UPF0339 family.

The chain is UPF0339 protein MA_3316 from Methanosarcina acetivorans (strain ATCC 35395 / DSM 2834 / JCM 12185 / C2A).